Consider the following 472-residue polypeptide: Alkaline phosphatase (472 aa).

The first 21 residues, 1–21, serve as a signal peptide directing secretion; sequence MKQSAIALALLSCLITPVSQA. D74 provides a ligand contact to Mg(2+). D74 provides a ligand contact to Zn(2+). S125 acts as the Phosphoserine intermediate in catalysis. Residues D176 and T178 each coordinate Mg(2+). Cystine bridges form between C191-C201 and C309-C359. Residue E345 coordinates Mg(2+). 5 residues coordinate Zn(2+): D350, H354, D392, H393, and H435.

The protein belongs to the alkaline phosphatase family. Homodimer. The cofactor is Mg(2+). Requires Zn(2+) as cofactor.

It localises to the periplasm. The catalysed reaction is a phosphate monoester + H2O = an alcohol + phosphate. In Escherichia fergusonii (strain ATCC 35469 / DSM 13698 / CCUG 18766 / IAM 14443 / JCM 21226 / LMG 7866 / NBRC 102419 / NCTC 12128 / CDC 0568-73), this protein is Alkaline phosphatase (phoA).